A 424-amino-acid chain; its full sequence is Gamma-glutamyl phosphate reductase (424 aa).

Belongs to the gamma-glutamyl phosphate reductase family.

The protein resides in the cytoplasm. It carries out the reaction L-glutamate 5-semialdehyde + phosphate + NADP(+) = L-glutamyl 5-phosphate + NADPH + H(+). It participates in amino-acid biosynthesis; L-proline biosynthesis; L-glutamate 5-semialdehyde from L-glutamate: step 2/2. Functionally, catalyzes the NADPH-dependent reduction of L-glutamate 5-phosphate into L-glutamate 5-semialdehyde and phosphate. The product spontaneously undergoes cyclization to form 1-pyrroline-5-carboxylate. In Dehalococcoides mccartyi (strain ATCC BAA-2266 / KCTC 15142 / 195) (Dehalococcoides ethenogenes (strain 195)), this protein is Gamma-glutamyl phosphate reductase.